Reading from the N-terminus, the 297-residue chain is Homoserine kinase (297 aa).

82 to 92 is a binding site for ATP; that stretch reads PVSRGLGSSAA.

The protein belongs to the GHMP kinase family. Homoserine kinase subfamily.

It is found in the cytoplasm. The enzyme catalyses L-homoserine + ATP = O-phospho-L-homoserine + ADP + H(+). It participates in amino-acid biosynthesis; L-threonine biosynthesis; L-threonine from L-aspartate: step 4/5. Its function is as follows. Catalyzes the ATP-dependent phosphorylation of L-homoserine to L-homoserine phosphate. The protein is Homoserine kinase of Clostridium botulinum (strain Kyoto / Type A2).